A 782-amino-acid chain; its full sequence is Structure-specific endonuclease subunit SLX4 (782 aa).

2 disordered regions span residues 63–91 and 359–425; these read TPKP…MSAM and KEHE…KKSK. The span at 73–84 shows a compositional bias: basic residues; that stretch reads GLRKTGSRKSKK. A compositionally biased stretch (polar residues) spans 374 to 388; the sequence is PAQSLTQSQVPSSID.

This sequence belongs to the SLX4 family. In terms of assembly, forms a heterodimer with SLX1. Post-translationally, phosphorylated in response to DNA damage.

It is found in the nucleus. Functionally, regulatory subunit of the SLX1-SLX4 structure-specific endonuclease that resolves DNA secondary structures generated during DNA repair and recombination. Has endonuclease activity towards branched DNA substrates, introducing single-strand cuts in duplex DNA close to junctions with ss-DNA. The sequence is that of Structure-specific endonuclease subunit SLX4 from Scheffersomyces stipitis (strain ATCC 58785 / CBS 6054 / NBRC 10063 / NRRL Y-11545) (Yeast).